Reading from the N-terminus, the 134-residue chain is Small ribosomal subunit protein uS11 (134 aa).

The protein belongs to the universal ribosomal protein uS11 family. In terms of assembly, part of the 30S ribosomal subunit. Interacts with proteins S7 and S18. Binds to IF-3.

Its function is as follows. Located on the platform of the 30S subunit, it bridges several disparate RNA helices of the 16S rRNA. Forms part of the Shine-Dalgarno cleft in the 70S ribosome. The chain is Small ribosomal subunit protein uS11 from Albidiferax ferrireducens (strain ATCC BAA-621 / DSM 15236 / T118) (Rhodoferax ferrireducens).